The sequence spans 272 residues: Diaminopimelate epimerase (272 aa).

Substrate contacts are provided by Asn11 and Asn60. The Proton donor role is filled by Cys69. Substrate is bound by residues 70-71 (GN), Asn181, and 199-200 (ER). Cys209 functions as the Proton acceptor in the catalytic mechanism. 210-211 (GT) contacts substrate.

It belongs to the diaminopimelate epimerase family. Homodimer.

The protein resides in the cytoplasm. It carries out the reaction (2S,6S)-2,6-diaminopimelate = meso-2,6-diaminopimelate. The protein operates within amino-acid biosynthesis; L-lysine biosynthesis via DAP pathway; DL-2,6-diaminopimelate from LL-2,6-diaminopimelate: step 1/1. Catalyzes the stereoinversion of LL-2,6-diaminopimelate (L,L-DAP) to meso-diaminopimelate (meso-DAP), a precursor of L-lysine and an essential component of the bacterial peptidoglycan. This is Diaminopimelate epimerase from Helicobacter pylori (strain P12).